We begin with the raw amino-acid sequence, 438 residues long: Enolase 1 (438 aa).

Substrate-binding residues include His-160 and Glu-169. Glu-212 (proton donor) is an active-site residue. 3 residues coordinate Mg(2+): Asp-247, Glu-296, and Asp-321. Positions 296 and 321 each coordinate substrate. Residue Lys-346 is the Proton acceptor of the active site. Substrate-binding positions include 373–376 and Lys-397; that span reads SHRS.

It belongs to the enolase family. As to quaternary structure, homodimer. Mg(2+) is required as a cofactor.

It is found in the cytoplasm. The enzyme catalyses (2R)-2-phosphoglycerate = phosphoenolpyruvate + H2O. The protein operates within carbohydrate degradation; glycolysis; pyruvate from D-glyceraldehyde 3-phosphate: step 4/5. The polypeptide is Enolase 1 (ENO1) (Candida glabrata (strain ATCC 2001 / BCRC 20586 / JCM 3761 / NBRC 0622 / NRRL Y-65 / CBS 138) (Yeast)).